The following is a 482-amino-acid chain: D-inositol 3-phosphate glycosyltransferase (482 aa).

H63 serves as a coordination point for 1D-myo-inositol 3-phosphate. Residues 69 to 70 and G77 each bind UDP-N-acetyl-alpha-D-glucosamine; that span reads QP. 1D-myo-inositol 3-phosphate contacts are provided by residues 74 to 79, K132, Y165, T189, and R209; that span reads DAGGMN. R289, K294, and Q355 together coordinate UDP-N-acetyl-alpha-D-glucosamine. Mg(2+)-binding residues include Y364, R365, and A367. Residues E377 and E385 each coordinate UDP-N-acetyl-alpha-D-glucosamine. T391 is a binding site for Mg(2+).

The protein belongs to the glycosyltransferase group 1 family. MshA subfamily. Homodimer.

It carries out the reaction 1D-myo-inositol 3-phosphate + UDP-N-acetyl-alpha-D-glucosamine = 1D-myo-inositol 2-acetamido-2-deoxy-alpha-D-glucopyranoside 3-phosphate + UDP + H(+). Its function is as follows. Catalyzes the transfer of a N-acetyl-glucosamine moiety to 1D-myo-inositol 3-phosphate to produce 1D-myo-inositol 2-acetamido-2-deoxy-glucopyranoside 3-phosphate in the mycothiol biosynthesis pathway. This chain is D-inositol 3-phosphate glycosyltransferase, found in Salinispora tropica (strain ATCC BAA-916 / DSM 44818 / JCM 13857 / NBRC 105044 / CNB-440).